The chain runs to 453 residues: Probable 1,4-beta-D-glucan cellobiohydrolase A (453 aa).

A signal peptide spans Met1 to Ala17. Glu226 (nucleophile) is an active-site residue. Catalysis depends on Glu231, which acts as the Proton donor. A glycan (N-linked (GlcNAc...) asparagine) is linked at Asn284.

The protein belongs to the glycosyl hydrolase 7 (cellulase C) family.

The protein localises to the secreted. It catalyses the reaction Hydrolysis of (1-&gt;4)-beta-D-glucosidic linkages in cellulose and cellotetraose, releasing cellobiose from the non-reducing ends of the chains.. Functionally, the biological conversion of cellulose to glucose generally requires three types of hydrolytic enzymes: (1) Endoglucanases which cut internal beta-1,4-glucosidic bonds; (2) Exocellobiohydrolases that cut the disaccharide cellobiose from the non-reducing end of the cellulose polymer chain; (3) Beta-1,4-glucosidases which hydrolyze the cellobiose and other short cello-oligosaccharides to glucose. The sequence is that of Probable 1,4-beta-D-glucan cellobiohydrolase A (cbhA) from Aspergillus clavatus (strain ATCC 1007 / CBS 513.65 / DSM 816 / NCTC 3887 / NRRL 1 / QM 1276 / 107).